The following is a 161-amino-acid chain: Ribonuclease H (161 aa).

In terms of domain architecture, RNase H type-1 spans 3–144 (GLKQISIYTD…CDDLARQAAE (142 aa)). 4 residues coordinate Mg(2+): D12, E50, D72, and D136. Residues 133-161 (ERCDDLARQAAEAKPSQEDSGYINQQAQA) are disordered. The segment covering 150 to 161 (EDSGYINQQAQA) has biased composition (polar residues).

Belongs to the RNase H family. Monomer. Mg(2+) serves as cofactor.

It localises to the cytoplasm. The catalysed reaction is Endonucleolytic cleavage to 5'-phosphomonoester.. Its function is as follows. Endonuclease that specifically degrades the RNA of RNA-DNA hybrids. This is Ribonuclease H from Shewanella halifaxensis (strain HAW-EB4).